The following is a 187-amino-acid chain: UPF0301 protein YqgE (187 aa).

This sequence belongs to the UPF0301 (AlgH) family.

The polypeptide is UPF0301 protein YqgE (Escherichia coli O7:K1 (strain IAI39 / ExPEC)).